The chain runs to 242 residues: tRNA (guanine-N(1)-)-methyltransferase (242 aa).

S-adenosyl-L-methionine-binding positions include Gly-115 and Leu-134 to Leu-139. Residues Gln-210–Leu-224 are compositionally biased toward basic and acidic residues. The segment at Gln-210–Ala-242 is disordered.

The protein belongs to the RNA methyltransferase TrmD family. In terms of assembly, homodimer.

It is found in the cytoplasm. It catalyses the reaction guanosine(37) in tRNA + S-adenosyl-L-methionine = N(1)-methylguanosine(37) in tRNA + S-adenosyl-L-homocysteine + H(+). Its function is as follows. Specifically methylates guanosine-37 in various tRNAs. This is tRNA (guanine-N(1)-)-methyltransferase from Synechococcus sp. (strain WH7803).